The primary structure comprises 331 residues: 6-phosphogluconolactonase (331 aa).

The protein belongs to the cycloisomerase 2 family.

The enzyme catalyses 6-phospho-D-glucono-1,5-lactone + H2O = 6-phospho-D-gluconate + H(+). Its pathway is carbohydrate degradation; pentose phosphate pathway; D-ribulose 5-phosphate from D-glucose 6-phosphate (oxidative stage): step 2/3. Its function is as follows. Catalyzes the hydrolysis of 6-phosphogluconolactone to 6-phosphogluconate. This Klebsiella pneumoniae subsp. pneumoniae (strain ATCC 700721 / MGH 78578) protein is 6-phosphogluconolactonase.